The following is a 466-amino-acid chain: Citrate synthase, mitochondrial (466 aa).

The N-terminal 27 residues, 1-27 (MALLTAAARLLGAKNSSCLVLAARHAS), are a transit peptide targeting the mitochondrion. The SIFI-degron signature appears at 2-21 (ALLTAAARLLGAKNSSCLVL). Lys57 is subject to N6-succinyllysine. Lys76 is subject to N6-acetyllysine; alternate. Lys76 bears the N6-succinyllysine; alternate mark. Residues Lys103 and Lys193 each carry the N6-succinyllysine modification. Ser226 carries the post-translational modification Phosphoserine. His301 is an active-site residue. Lys321 and Lys327 each carry N6-acetyllysine; alternate. N6-succinyllysine; alternate occurs at positions 321 and 327. His347 is a catalytic residue. Arg356 lines the oxaloacetate pocket. At Lys375 the chain carries N6-acetyllysine; alternate. Lys375 is modified (N6-succinyllysine; alternate). Residue Lys382 is modified to N6-acetyllysine. Lys393 is modified (N6-acetyllysine; alternate). An N6-succinyllysine; alternate modification is found at Lys393. Position 395 is an N6,N6,N6-trimethyllysine (Lys395). Asp402 is an active-site residue. Oxaloacetate contacts are provided by Arg428 and Arg448. Lys450 bears the N6-succinyllysine mark. N6-acetyllysine; alternate is present on Lys459. Lys459 carries the N6-succinyllysine; alternate modification.

The protein belongs to the citrate synthase family. In terms of assembly, homodimer. In terms of processing, methylated. Trimethylation at Lys-395 by CSKMT decreases citrate synthase activity. Post-translationally, in response to mitochondrial stress, the precursor protein is ubiquitinated by the SIFI complex in the cytoplasm before mitochondrial import, leading to its degradation. Within the SIFI complex, UBR4 initiates ubiquitin chain that are further elongated or branched by KCMF1. As to expression, expressed in the head region and flagellum of epididymal sperm.

It is found in the mitochondrion matrix. It carries out the reaction oxaloacetate + acetyl-CoA + H2O = citrate + CoA + H(+). The protein operates within carbohydrate metabolism; tricarboxylic acid cycle; isocitrate from oxaloacetate: step 1/2. Key enzyme of the Krebs tricarboxylic acid cycle which catalyzes the synthesis of citrate from acetyl coenzyme A and oxaloacetate. This is Citrate synthase, mitochondrial (Cs) from Rattus norvegicus (Rat).